The sequence spans 499 residues: Terminase, large subunit (499 aa).

An interaction with the terminase small subunit region spans residues 1 to 58; that stretch reads MELDAILDNLSDEEQIELLELLEEEENYRNTHLLYEFAPYSKQREFIDAGHDYPERCF. An ATPase activity region spans residues 1 to 286; sequence MELDAILDNL…EHEREARARG (286 aa). The Walker A motif motif lies at 60–67; it reads AGNQLGKS. A Walker B motif motif is present at residues 199–204; the sequence is GVWFDE. Glu204 functions as the For ATPase activity in the catalytic mechanism. Residues 312 to 482 form a nuclease activity region; it reads DHFYVIDAQD…FARMMRDIRK (171 aa). Mg(2+) contacts are provided by Asp321 and Asp459.

The protein belongs to the Lederbergvirus large terminase family. In terms of assembly, interacts with the terminase small subunit; the active complex is composed of dimer of terminase large subunits and a nonamer ring of terminase small subunits. Interacts with the portal protein; this interaction allows the packaging of viral DNA. Requires Mg(2+) as cofactor.

The terminase large subunit acts as an ATP driven molecular motor necessary for viral DNA translocation into empty capsids and as an endonuclease that cuts the viral genome to initiate and to end a packaging reaction. The terminase lies at a unique vertex of the procapsid and is composed of two subunits, a small terminase subunit involved in viral DNA recognition (packaging 'pac' sequence), and a large terminase subunit possessing endonucleolytic and ATPase activities. Both terminase subunits heterooligomerize and are docked on the portal protein to form the packaging machine. Once the capsid is packaged with the DNA (headful packaging), the terminase cleaves the viral genome concatemer and is substituted by the tail. This Salmonella phage P22 (Bacteriophage P22) protein is Terminase, large subunit (2).